The following is a 786-amino-acid chain: Wall-associated receptor kinase-like 17 (786 aa).

Residues 1–30 (MSYKNTNNSHLILFKLLLLLILYSADLTAS) form the signal peptide. The Extracellular portion of the chain corresponds to 31-369 (SSCRSECGGC…YRCVGDKTKA (339 aa)). N-linked (GlcNAc...) asparagine glycosylation is found at N69, N122, N160, N165, and N274. The interval 301-362 (CICDYTMSII…CVNFEGGYRC (62 aa)) is atypical EGF-like. 3 disulfide bridges follow: C303–C318, C340–C353, and C347–C362. Residues 370–390 (IMIGAGTGFGVLVLVGGVWWL) traverse the membrane as a helical segment. Topologically, residues 391–786 (RKFLVKRRMA…VEPLNPLLTW (396 aa)) are cytoplasmic. T433 is modified (phosphothreonine). One can recognise a Protein kinase domain in the interval 444–719 (FSENRVLGHG…REVFTELERI (276 aa)). ATP contacts are provided by residues 450-458 (LGHGGQGTV) and K472. Y517 carries the post-translational modification Phosphotyrosine. D570 acts as the Proton acceptor in catalysis. Residues T604 and T609 each carry the phosphothreonine modification. Phosphotyrosine is present on Y617. Residues 766–775 (SSIVASPPSS) show a composition bias toward low complexity. Residues 766–786 (SSIVASPPSSDVEPLNPLLTW) form a disordered region.

It belongs to the protein kinase superfamily. Ser/Thr protein kinase family.

It is found in the membrane. The catalysed reaction is L-seryl-[protein] + ATP = O-phospho-L-seryl-[protein] + ADP + H(+). It catalyses the reaction L-threonyl-[protein] + ATP = O-phospho-L-threonyl-[protein] + ADP + H(+). Its function is as follows. Serine/threonine-protein kinase that may function as a signaling receptor of extracellular matrix component. The protein is Wall-associated receptor kinase-like 17 (WAKL17) of Arabidopsis thaliana (Mouse-ear cress).